We begin with the raw amino-acid sequence, 60 residues long: Large ribosomal subunit protein uL29 (60 aa).

This sequence belongs to the universal ribosomal protein uL29 family.

This is Large ribosomal subunit protein uL29 from Fusobacterium nucleatum subsp. nucleatum (strain ATCC 25586 / DSM 15643 / BCRC 10681 / CIP 101130 / JCM 8532 / KCTC 2640 / LMG 13131 / VPI 4355).